Consider the following 229-residue polypeptide: Serine acetyltransferase (229 aa).

It belongs to the transferase hexapeptide repeat family.

It localises to the cytoplasm. It carries out the reaction L-serine + acetyl-CoA = O-acetyl-L-serine + CoA. It participates in amino-acid biosynthesis; L-cysteine biosynthesis; L-cysteine from L-serine: step 1/2. Catalyzes the acetylation of serine by acetyl-CoA to produce O-acetylserine (OAS). This is Serine acetyltransferase (cysE) from Mycobacterium tuberculosis (strain ATCC 25618 / H37Rv).